The chain runs to 212 residues: Proteasome subunit beta type-2 (212 aa).

Belongs to the peptidase T1B family. The 26S proteasome consists of a 20S proteasome core and two 19S regulatory subunits. The 20S proteasome core is composed of 28 subunits that are arranged in four stacked rings, resulting in a barrel-shaped structure. The two end rings are each formed by seven alpha subunits, and the two central rings are each formed by seven beta subunits. The catalytic chamber with the active sites is on the inside of the barrel.

Its subcellular location is the cytoplasm. The protein resides in the nucleus. Non-catalytic component of the proteasome, a multicatalytic proteinase complex which is characterized by its ability to cleave peptides with Arg, Phe, Tyr, Leu, and Glu adjacent to the leaving group at neutral or slightly basic pH. The proteasome has an ATP-dependent proteolytic activity. This chain is Proteasome subunit beta type-2 (PBD1), found in Oryza sativa subsp. japonica (Rice).